Reading from the N-terminus, the 87-residue chain is DNA-directed RNA polymerase subunit omega (87 aa).

This sequence belongs to the RNA polymerase subunit omega family. The RNAP catalytic core consists of 2 alpha, 1 beta, 1 beta' and 1 omega subunit. When a sigma factor is associated with the core the holoenzyme is formed, which can initiate transcription.

The enzyme catalyses RNA(n) + a ribonucleoside 5'-triphosphate = RNA(n+1) + diphosphate. Functionally, promotes RNA polymerase assembly. Latches the N- and C-terminal regions of the beta' subunit thereby facilitating its interaction with the beta and alpha subunits. The protein is DNA-directed RNA polymerase subunit omega of Pseudomonas fluorescens (strain ATCC BAA-477 / NRRL B-23932 / Pf-5).